Reading from the N-terminus, the 456-residue chain is Perilipin-5 (456 aa).

A disordered region spans residues Met1–Gln20. Residues Met1–Gln108 are interaction with LIPE. The tract at residues Met1 to Leu173 is essential for lipid droplet targeting. Ser2, Ser148, and Ser324 each carry phosphoserine. Residues Val185–Phe456 are interaction with PNPLA2 and ABHD5. Positions Ala420–Phe456 are disordered. Residues Glu438–Phe456 form a recruits mitochondria at the lipid droplet surface region.

This sequence belongs to the perilipin family. In terms of assembly, homooligomer. Interacts with PNPLA2; prevents interaction of PNPLA2 with ABHD5. Interacts with ABHD5; targets ABHD5 to lipid droplets and promotes interaction of ABHD5 with PNPLA2. Interacts with LIPE. Phosphorylated by PKA. Phosphorylated on serine in skeletal muscle at rest or upon lipolytic stimulation.

It localises to the lipid droplet. It is found in the cytoplasm. Its subcellular location is the mitochondrion. Lipid droplet-associated protein that maintains the balance between lipogenesis and lipolysis and also regulates fatty acid oxidation in oxidative tissues. Recruits mitochondria to the surface of lipid droplets and is involved in lipid droplet homeostasis by regulating both the storage of fatty acids in the form of triglycerides and the release of fatty acids for mitochondrial fatty acid oxidation. In lipid droplet triacylglycerol hydrolysis, plays a role as a scaffolding protein for three major key lipolytic players: ABHD5, PNPLA2 and LIPE. Reduces the triacylglycerol hydrolase activity of PNPLA2 by recruiting and sequestering PNPLA2 to lipid droplets. Phosphorylation by PKA enables lipolysis probably by promoting release of ABHD5 from the perilipin scaffold and by facilitating interaction of ABHD5 with PNPLA2. Also increases lipolysis through interaction with LIPE and upon PKA-mediated phosphorylation of LIPE. The chain is Perilipin-5 (Plin5) from Ovis aries (Sheep).